Consider the following 490-residue polypeptide: Glutamyl-tRNA(Gln) amidotransferase subunit A (490 aa).

Residues Lys-78 and Ser-153 each act as charge relay system in the active site. Catalysis depends on Ser-177, which acts as the Acyl-ester intermediate.

This sequence belongs to the amidase family. GatA subfamily. Heterotrimer of A, B and C subunits.

It catalyses the reaction L-glutamyl-tRNA(Gln) + L-glutamine + ATP + H2O = L-glutaminyl-tRNA(Gln) + L-glutamate + ADP + phosphate + H(+). Allows the formation of correctly charged Gln-tRNA(Gln) through the transamidation of misacylated Glu-tRNA(Gln) in organisms which lack glutaminyl-tRNA synthetase. The reaction takes place in the presence of glutamine and ATP through an activated gamma-phospho-Glu-tRNA(Gln). This is Glutamyl-tRNA(Gln) amidotransferase subunit A from Bdellovibrio bacteriovorus (strain ATCC 15356 / DSM 50701 / NCIMB 9529 / HD100).